The sequence spans 518 residues: MATTRFPSLLFYSCIFLLCNGSMAQLFGQSFTPWQSSRQGGLRGCKFDRLQAFEPLRQVRSQAGITEYFDEQNEQFRCAGVSVIRRVIEPQGLLLPQYHNAPGLVYILQGRGFTGLTFPGCPATFQQQFQQFDQARFAQGQSKSQNLKDEHQRVHHIKQGDVVALPAGIVHWCYNDGDAPIVAVYVFDVNNNANQLEPRQKEFLLAGNNKREQQFGQNIFSGFSVQLLSEALGISQQAAQKIQSQNDQRGEIIRVSQGLQFLKPFVSQQGPVEHQAYQPIQSQQEQSTQYQVGQSPQYQEGQSTQYQSGQSWDQSFNGLEENFCSLEARQNIENPKRADTYNPRAGRITHLNSKNFPTLNLVQMSATRVNLYQNAILSPYWNINAHSVMHMIQGRARVQVVNNHGQTVFNDILRRGQLLIIPQHYVVLKKAEREGCQYISFKTTPNSMVSYIAGKTSILRALPVDVLANAYRISRQESQNLKNNRGEEFGAFTPKFAQTGSQSYQDEGESSSTEKASE.

A signal peptide spans 1-24; sequence MATTRFPSLLFYSCIFLLCNGSMA. Disulfide bonds link cysteine 45-cysteine 78 and cysteine 121-cysteine 324. The region spanning 50–240 is the Cupin type-1 1 domain; the sequence is LQAFEPLRQV…ALGISQQAAQ (191 aa). Positions 281–295 are enriched in low complexity; the sequence is QSQQEQSTQYQVGQS. The tract at residues 281-311 is disordered; that stretch reads QSQQEQSTQYQVGQSPQYQEGQSTQYQSGQS. The segment covering 296–311 has biased composition (polar residues); the sequence is PQYQEGQSTQYQSGQS. The region spanning 330 to 479 is the Cupin type-1 2 domain; sequence QNIENPKRAD…AYRISRQESQ (150 aa). Positions 496–518 are disordered; that stretch reads FAQTGSQSYQDEGESSSTEKASE.

This sequence belongs to the 11S seed storage protein (globulins) family. In terms of assembly, hexamer; each subunit is composed of an acidic and a basic chain derived from a single precursor and linked by a disulfide bond.

Its function is as follows. This is a seed storage protein. The protein is 12S seed storage globulin 1 of Avena sativa (Oat).